Reading from the N-terminus, the 546-residue chain is Hydroxylamine reductase (546 aa).

Residues C3, C6, C18, and C25 each coordinate [4Fe-4S] cluster. Hybrid [4Fe-2O-2S] cluster is bound by residues H245, E269, C313, C401, C429, C454, E488, and K490. C401 bears the Cysteine persulfide mark.

Belongs to the HCP family. It depends on [4Fe-4S] cluster as a cofactor. Hybrid [4Fe-2O-2S] cluster serves as cofactor.

Its subcellular location is the cytoplasm. It catalyses the reaction A + NH4(+) + H2O = hydroxylamine + AH2 + H(+). Its activity is regulated as follows. Inhibited by cyanide and by sulfide and iron reagents such as dithioerythritol, 2,2'-dipyridyl and o-phenanthroline. Its function is as follows. Could be involved in assimilation and/or detoxification of hydroxylamine, which is a toxic compound that may be formed during nitrate/nitrite assimilation. Catalyzes the reduction of hydroxylamine to form NH(3) and H(2)O. It has a low reductase activity with FAD, FMN, benzyl viologen and bromphenol blue as electrons donors, but it is not able to use NAD or NADP. This chain is Hydroxylamine reductase, found in Rhodobacter capsulatus (Rhodopseudomonas capsulata).